The primary structure comprises 178 residues: Inorganic pyrophosphatase (178 aa).

Positions 30, 44, and 56 each coordinate substrate. Residues aspartate 66, aspartate 71, and aspartate 103 each coordinate Mg(2+). Residue tyrosine 140 coordinates substrate.

Belongs to the PPase family. Homohexamer. Mg(2+) is required as a cofactor.

The protein localises to the cytoplasm. It catalyses the reaction diphosphate + H2O = 2 phosphate + H(+). Its function is as follows. Catalyzes the hydrolysis of inorganic pyrophosphate (PPi) forming two phosphate ions. The chain is Inorganic pyrophosphatase from Thermococcus kodakarensis (strain ATCC BAA-918 / JCM 12380 / KOD1) (Pyrococcus kodakaraensis (strain KOD1)).